Consider the following 93-residue polypeptide: Transcription factor RADIALIS (93 aa).

Residues Gly-6 to Lys-61 enclose the SANT domain.

In terms of tissue distribution, specifically expressed in the dorsal region of developing flowers.

The protein resides in the nucleus. In terms of biological role, involved in the dorsovental asymmetry of flowers. Promotes dorsal identity. The sequence is that of Transcription factor RADIALIS (RAD) from Antirrhinum majus (Garden snapdragon).